We begin with the raw amino-acid sequence, 427 residues long: MPHADQLITNIGRLVTGPQAPLRGQQLAQLTAIDQAVVAVQAGNIVALGSQAELSAWTADQTIDAGGYLAIPGFVDPHTHACYAGDRAHEFELRIKGASYSELMAAGGGIMSTVHATRAASKAELVAQTRPRLDQLLAHGTTTVEIKSGYGLDTATELTMLEAIAELAQTHPIGIVPTFMGAHAIPAEYRDNPEAFVDLVVDEMLPAVAAWWQQQTIWQEPLACDIFCENGAFSVAQSQRILVKAKALGFRLKLHVDEFEPLGGTPLAVELGAISVDHLVATPPEHIAILANSETVGVSLPGTPFGLGKSQFSPARSLIEANGILALATDCNPGTSPCESMPMAIAIACRYLRLTPAEALNAATVNSAFAIRQHERVGSLAVGMQADLALLNLPDERHIGYKFGTNPVAIVIKTGRVVRRNQLHADR.

Fe(3+) is bound by residues His-78 and His-80. Residues His-78 and His-80 each contribute to the Zn(2+) site. 3 residues coordinate 4-imidazolone-5-propanoate: Arg-87, Tyr-150, and His-183. Residue Tyr-150 coordinates N-formimidoyl-L-glutamate. His-255 contacts Fe(3+). Zn(2+) is bound at residue His-255. Glu-258 contacts 4-imidazolone-5-propanoate. Asp-330 provides a ligand contact to Fe(3+). Position 330 (Asp-330) interacts with Zn(2+). N-formimidoyl-L-glutamate is bound by residues Asn-332 and Gly-334. Thr-335 contacts 4-imidazolone-5-propanoate.

The protein belongs to the metallo-dependent hydrolases superfamily. HutI family. The cofactor is Zn(2+). Fe(3+) serves as cofactor.

It is found in the cytoplasm. It carries out the reaction 4-imidazolone-5-propanoate + H2O = N-formimidoyl-L-glutamate. Its pathway is amino-acid degradation; L-histidine degradation into L-glutamate; N-formimidoyl-L-glutamate from L-histidine: step 3/3. Catalyzes the hydrolytic cleavage of the carbon-nitrogen bond in imidazolone-5-propanoate to yield N-formimidoyl-L-glutamate. It is the third step in the universal histidine degradation pathway. The protein is Imidazolonepropionase of Herpetosiphon aurantiacus (strain ATCC 23779 / DSM 785 / 114-95).